We begin with the raw amino-acid sequence, 337 residues long: Hairy/enhancer-of-split related with YRPW motif protein 2 (337 aa).

Residues 1–52 (MKRPCEETTSESDMDETIDVGSENNYSGQSTSSVIRLNSPTTTSQIMARKKR) are disordered. Residues 8 to 18 (TTSESDMDETI) show a composition bias toward acidic residues. Residues 22–46 (SENNYSGQSTSSVIRLNSPTTTSQI) show a composition bias toward polar residues. The transcriptional repression and interaction with NCOR1 and SIN3A stretch occupies residues 47–116 (MARKKRRGII…GGKGYFDAHA (70 aa)). In terms of domain architecture, bHLH spans 48–103 (ARKKRRGIIEKRRRDRINNSLSELRRLVPTAFEKQGSAKLEKAEILQMTVDHLKML). An Orange domain is found at 122–157 (MSIGFRECLTEVARYLSSVEGLDSSDPLRVRLVSHL). Over residues 307 to 325 (LSVSATSSPQQTSSGTNNK) the composition is skewed to polar residues. The segment at 307–337 (LSVSATSSPQQTSSGTNNKPYRPWGTEVGAF) is disordered. Positions 327 to 330 (YRPW) match the YRPW motif motif.

Belongs to the HEY family. May self-associate. Interacts with GATA4, HES1 and HEYL. Interacts with HDAC1, NCOR1 and SIN3A. Interacts with ARNT and GATA6.

The protein resides in the nucleus. Functionally, downstream effector of Notch signaling which may be required for cardiovascular development. Transcriptional repressor which binds preferentially to the canonical E box sequence 5'-CACGTG-3'. Represses transcription by the cardiac transcriptional activators GATA4 and GATA6. In Homo sapiens (Human), this protein is Hairy/enhancer-of-split related with YRPW motif protein 2 (HEY2).